We begin with the raw amino-acid sequence, 218 residues long: NADH-ubiquinone oxidoreductase 21 kDa subunit, mitochondrial (218 aa).

The N-terminal 33 residues, Met-1–Ala-33, are a transit peptide targeting the mitochondrion. A disordered region spans residues Arg-31 to Val-74. Basic and acidic residues predominate over residues Arg-50–Ser-60.

This sequence belongs to the complex I NDUFS4 subunit family. As to quaternary structure, complex I is composed of about 40 different subunits. This is a component of the iron-sulfur (IP) fragment of the enzyme.

The protein localises to the mitochondrion inner membrane. Functionally, accessory subunit of the mitochondrial membrane respiratory chain NADH dehydrogenase (Complex I), that is believed not to be involved in catalysis. Complex I functions in the transfer of electrons from NADH to the respiratory chain. The immediate electron acceptor for the enzyme is believed to be ubiquinone. This chain is NADH-ubiquinone oxidoreductase 21 kDa subunit, mitochondrial (nuo-21), found in Neurospora crassa (strain ATCC 24698 / 74-OR23-1A / CBS 708.71 / DSM 1257 / FGSC 987).